A 473-amino-acid chain; its full sequence is Ras-GEF domain-containing family member 1B (473 aa).

Residues 34-164 form the N-terminal Ras-GEF domain; it reads HDNNLLSGSL…QMMQCLIRKL (131 aa). Residues 204–452 enclose the Ras-GEF domain; the sequence is NDPYTLAQQL…LYLASYESEG (249 aa).

As to quaternary structure, interacts with Ras family proteins. Interacts with CCDC124 during cytokinesis.

Its subcellular location is the early endosome. It is found in the late endosome. The protein resides in the midbody. In terms of biological role, guanine nucleotide exchange factor (GEF) with specificity for RAP2A, it doesn't seems to activate other Ras family proteins (in vitro). The protein is Ras-GEF domain-containing family member 1B (RASGEF1B) of Homo sapiens (Human).